Consider the following 745-residue polypeptide: Mitogen-activated protein kinase kinase kinase zak-1 (745 aa).

In terms of domain architecture, Protein kinase spans 31-305; it reads IQVGDHIGVG…KVMDECEKFM (275 aa). Residues 37–45 and Lys-63 contribute to the ATP site; that span reads IGVGTFGAV. Asp-159 acts as the Proton acceptor in catalysis. The stretch at 307–352 forms a coiled coil; it reads LEDWKTEIEKQEKNVEKMRKDLEKRREQLEIREKALKQRMKVEQAV. The region spanning 366 to 438 is the SAM domain; sequence WSEHHTSHWV…MKMIRKLADT (73 aa). The interval 693 to 745 is disordered; the sequence is LTRRRRTTTTNSEDTEKSDTNNKTPESQARRVHVHGGKDKWNWKKGKSRPKFT. A compositionally biased stretch (basic residues) spans 735 to 745; that stretch reads WKKGKSRPKFT.

Belongs to the protein kinase superfamily. STE Ser/Thr protein kinase family. MAP kinase kinase kinase subfamily. Mg(2+) is required as a cofactor. In terms of tissue distribution, widely expressed; expressed in most tissues, including intestines, muscle and the nervous system.

The protein localises to the cytoplasm. It localises to the nucleus. It catalyses the reaction L-seryl-[protein] + ATP = O-phospho-L-seryl-[protein] + ADP + H(+). The enzyme catalyses L-threonyl-[protein] + ATP = O-phospho-L-threonyl-[protein] + ADP + H(+). Functionally, stress-activated component of a protein kinase signal transduction cascade that promotes programmed cell death in response to ribotoxic stress. Acts as the proximal sensor of ribotoxic stress: directly binds to the ribosome, thereby acting as a sentinel for colliding ribosomes. Upon ribosome collisions, activates the stress-activated protein kinase signal transduction cascade, leading to programmed cell death. Acts by catalyzing phosphorylation of MAP kinase kinases, leading to activation of the JNK and MAP kinase p38 pathways. The sequence is that of Mitogen-activated protein kinase kinase kinase zak-1 from Caenorhabditis elegans.